Reading from the N-terminus, the 260-residue chain is 14-3-3-like protein GF14-F (260 aa).

Residues 241–260 form a disordered region; it reads NAEDGGDEIKEAAKPEGEGH. The segment covering 247–260 has biased composition (basic and acidic residues); it reads DEIKEAAKPEGEGH.

Belongs to the 14-3-3 family. As to quaternary structure, may form a complex with the transcriptional activator VP1 and the bZIP transcription factor EMBP1. As to expression, expressed in seedlings, roots and panicles and at lower levels in flag leaves and internodes.

The protein resides in the cytoplasm. The protein localises to the nucleus. In terms of biological role, is associated with a DNA binding complex that binds to the G box, a well-characterized cis-acting DNA regulatory element found in plant genes. The protein is 14-3-3-like protein GF14-F (GF14F) of Oryza sativa subsp. japonica (Rice).